The following is a 432-amino-acid chain: MLCPSSMDEEGSEEIGFLGDLSVGMDTFIHRIDSTEVIYQPRRKRAKLVGKYLMGDLLGEGSYGKVKEMLDSDTLCRRAVKILKKKKLRRIPNGEANVKKEIQLLRRLRHRNVIQLVDVLYNEEKQKMYMVMEYCVCGMQEMLDSVQDKHFPVFQAHGYFCQLIDGLEYLHSQGIVHKDIKPGNLLLTTDGTLKISDLGVAEALHPFAEGDTCRTSQGSPAFQPPEIANGLDTFSGFKVDIWSAGVTLYNITTGLYPFEGDNIYKLFENIGKGDYSIPEECGPLLSDLLRGMLEYDPAKRFSIQQIRQHNWFRKKHPHMDPIVPIPPSPETKDRWRSLTVVPYLEDLHGYSEEEDLCDFEDDIIYTQDFTVPGQVAEDDYFAQTQSTAPSKQLCMNGTESQLKTERRVSSSSQRKASTTGSKVRKLSACKQQ.

In terms of domain architecture, Protein kinase spans 52–312 (YLMGDLLGEG…IQQIRQHNWF (261 aa)). Residues 58–66 (LGEGSYGKV) and Lys-81 each bind ATP. Residue Asp-179 is the Proton acceptor of the active site. Thr-192 bears the Phosphothreonine; by autocatalysis mark. Positions 398–432 (TESQLKTERRVSSSSQRKASTTGSKVRKLSACKQQ) are disordered. A compositionally biased stretch (polar residues) spans 409 to 421 (SSSSQRKASTTGS). Over residues 422 to 432 (KVRKLSACKQQ) the composition is skewed to basic residues. Position 427 is a phosphoserine; by PKA (Ser-427).

This sequence belongs to the protein kinase superfamily. CAMK Ser/Thr protein kinase family. LKB1 subfamily. In terms of assembly, catalytic component of a trimeric complex composed of STK11/LKB1, STRAD (STRADA or STRADB) and CAB39/MO25 (CAB39/MO25alpha or CAB39L/MO25beta). Mg(2+) is required as a cofactor. The cofactor is Mn(2+). Post-translationally, phosphorylated by a cAMP-dependent protein kinase. Autophosphorylated in a reaction that prefers Mn(2+) to Mg(2+). Oocytes, eggs and early embryos.

The protein localises to the nucleus. The protein resides in the cytoplasm. The enzyme catalyses L-seryl-[protein] + ATP = O-phospho-L-seryl-[protein] + ADP + H(+). It carries out the reaction L-threonyl-[protein] + ATP = O-phospho-L-threonyl-[protein] + ADP + H(+). Tumor suppressor serine/threonine-protein kinase that controls the activity of AMP-activated protein kinase (AMPK) family members, thereby playing a role in various processes such as cell metabolism, cell polarity, apoptosis and DNA damage response. Acts by phosphorylating the T-loop of AMPK family proteins, leading to promote their activity. This Xenopus laevis (African clawed frog) protein is Serine/threonine-protein kinase stk11.